Reading from the N-terminus, the 138-residue chain is Large-conductance mechanosensitive channel (138 aa).

2 helical membrane passes run 10-30 and 76-96; these read FAMR…AAFG and GSFI…FLAI.

Belongs to the MscL family. Homopentamer.

It is found in the cell inner membrane. Its function is as follows. Channel that opens in response to stretch forces in the membrane lipid bilayer. May participate in the regulation of osmotic pressure changes within the cell. This Serratia proteamaculans (strain 568) protein is Large-conductance mechanosensitive channel.